We begin with the raw amino-acid sequence, 396 residues long: S-adenosylmethionine synthase 4 (396 aa).

Glutamate 12 is a Mg(2+) binding site. Histidine 18 lines the ATP pocket. Residue glutamate 46 participates in K(+) binding. Residues glutamate 59 and glutamine 102 each contribute to the L-methionine site. ATP-binding positions include 170-172 (DGK), 238-241 (SGRF), aspartate 249, 255-256 (RK), alanine 272, lysine 276, and lysine 280. Aspartate 249 is a binding site for L-methionine. Lysine 280 contributes to the L-methionine binding site.

The protein belongs to the AdoMet synthase family. In terms of assembly, homotetramer. It depends on Mn(2+) as a cofactor. Mg(2+) is required as a cofactor. The cofactor is Co(2+). Requires K(+) as cofactor.

It localises to the cytoplasm. It carries out the reaction L-methionine + ATP + H2O = S-adenosyl-L-methionine + phosphate + diphosphate. Its pathway is amino-acid biosynthesis; S-adenosyl-L-methionine biosynthesis; S-adenosyl-L-methionine from L-methionine: step 1/1. In terms of biological role, catalyzes the formation of S-adenosylmethionine from methionine and ATP. The reaction comprises two steps that are both catalyzed by the same enzyme: formation of S-adenosylmethionine (AdoMet) and triphosphate, and subsequent hydrolysis of the triphosphate. The chain is S-adenosylmethionine synthase 4 (SAM4) from Hordeum vulgare (Barley).